The sequence spans 534 residues: MDATAFHPSLWGDFFVKYKPPTAPKRGHMTERAELLKEEVRKTLKAAANQIKNALDLIITLQRLGLDHHYENEISELLRFVYSSSDYDDKDLYVVSLRFYLLRKHGHCVSSDVFTSFKDEEGNFVVDDTKCLLTLYNAAYLRTHGEKVLDEAITFTRRQLEASLLDPLEPALLADEVSLTLQTPLFRRLRILEAINYIPIYGKEAGRNEAILELAKLNFNLAQLIYCEELKEVTLWWKQLNVETNLSFIRDRIVECHFWMTGACCEPQYSLSRVIATKMTALITVLDDMMDTYSTTEEAMLLAEAIYGWEENAAELLPGYMKDFYLYLLKTIDSCGDELGPNRSFRTFYLKEMLKVLVRGSSQEIKWRNENYVPKTISEHLEHSGPSVGAFQVACSSFVGMGDSITKGSFEWLLTYPELAKSLMNIARLLNDTASTKREQNAGHHVSTVQCYMLMHGTTMDEACEKIKELTEDSWKDMMELYLTPTEHPKLIAQTIVDFARTADYMYKETDGFTFSHTIKDMIAKLFVDPISLF.

Residues D287, D291, N431, S435, and E439 each coordinate Mg(2+). A DDXXD motif motif is present at residues 287–291 (DDMMD).

The protein belongs to the terpene synthase family. Mg(2+) serves as cofactor. Requires Co(2+) as cofactor. It depends on Mn(2+) as a cofactor.

The protein localises to the cytoplasm. The catalysed reaction is (2E,6E)-farnesyl diphosphate = (E)-beta-farnesene + diphosphate. It participates in secondary metabolite biosynthesis; terpenoid biosynthesis. Functionally, sesquiterpene cyclase catalyzing the production of beta-farnesene and alpha-bergamotene in equal amounts from farnesyl diphosphate. Involved in indirect defense by producing volatile signals attracting natural enemies of herbivores. This is (E)-beta-farnesene synthase from Zea mays subsp. mexicana (Mexican teosinte).